Here is a 190-residue protein sequence, read N- to C-terminus: Segregation and condensation protein B (190 aa).

Belongs to the ScpB family. In terms of assembly, homodimer. Homodimerization may be required to stabilize the binding of ScpA to the Smc head domains. Component of a cohesin-like complex composed of ScpA, ScpB and the Smc homodimer, in which ScpA and ScpB bind to the head domain of Smc. The presence of the three proteins is required for the association of the complex with DNA.

The protein resides in the cytoplasm. Functionally, participates in chromosomal partition during cell division. May act via the formation of a condensin-like complex containing Smc and ScpA that pull DNA away from mid-cell into both cell halves. In Ruminiclostridium cellulolyticum (strain ATCC 35319 / DSM 5812 / JCM 6584 / H10) (Clostridium cellulolyticum), this protein is Segregation and condensation protein B.